A 395-amino-acid polypeptide reads, in one-letter code: Outer membrane protein assembly factor BamB (395 aa).

Residues 1 to 20 (MKSWCKNLLAAGLSLAMLSA) form the signal peptide. The N-palmitoyl cysteine moiety is linked to residue Cys21. Cys21 carries S-diacylglycerol cysteine lipidation.

Belongs to the BamB family. Part of the Bam complex.

The protein resides in the cell outer membrane. Its function is as follows. Part of the outer membrane protein assembly complex, which is involved in assembly and insertion of beta-barrel proteins into the outer membrane. The polypeptide is Outer membrane protein assembly factor BamB (Shewanella oneidensis (strain ATCC 700550 / JCM 31522 / CIP 106686 / LMG 19005 / NCIMB 14063 / MR-1)).